The primary structure comprises 117 residues: Flagellar transcriptional regulator FlhD (117 aa).

The protein belongs to the FlhD family. Homodimer; disulfide-linked. Forms a heterohexamer composed of two FlhC and four FlhD subunits. Each FlhC binds a FlhD dimer, forming a heterotrimer, and a hexamer assembles by dimerization of two heterotrimers.

The protein resides in the cytoplasm. In terms of biological role, functions in complex with FlhC as a master transcriptional regulator that regulates transcription of several flagellar and non-flagellar operons by binding to their promoter region. Activates expression of class 2 flagellar genes, including fliA, which is a flagellum-specific sigma factor that turns on the class 3 genes. Also regulates genes whose products function in a variety of physiological pathways. This chain is Flagellar transcriptional regulator FlhD, found in Erwinia amylovora (strain CFBP1430).